The chain runs to 445 residues: MTTILPNLPTGQKVGIAFSGGLDTSAALLWMRQKGAVPYAYTANLGQPDEPDYDEIPRRAMQYGAEAARLVDCRAQLVAEGIAALQAGAFHISTAGLTYFNTTPIGRAVTGTMLVAAMKEDGVNIWGDGSTFKGNDIERFYRYGLLTNPDLKIYKPWLDQTFIDELGGRAEMSEYMRQAGFDYKMSAEKAYSTDSNMLGATHEAKDLELLNSGIRIVQPIMGVAFWQDSVQIKAEEVTVRFEEGQPVALNGVEYADPVELLLEANRIGGRHGLGMSDQIENRIIEAKSRGIYEAPGLALLFIAYERLVTGIHNEDTIEQYRENGRKLGRLLYQGRWFDPQAIMLRETAQRWVARAITGEVTLELRRGNDYSLLNTESANLTYAPERLSMEKVENAPFTPADRIGQLTMRNLDIVDTREKLFTYVKTGLLAPSAGSALPQIKDGKK.

Residues Ala-17–Ser-25 and Ala-43 each bind ATP. Position 99 (Tyr-99) interacts with L-citrulline. ATP contacts are provided by Gly-129 and Thr-131. Residues Thr-131, Asn-135, and Asp-136 each contribute to the L-aspartate site. Asn-135 is a binding site for L-citrulline. Position 136 (Asp-136) interacts with ATP. 2 residues coordinate L-citrulline: Arg-139 and Ser-192. Asp-194 serves as a coordination point for ATP. L-citrulline is bound by residues Thr-201, Glu-203, and Glu-280.

Belongs to the argininosuccinate synthase family. Type 2 subfamily. Homotetramer.

The protein localises to the cytoplasm. The enzyme catalyses L-citrulline + L-aspartate + ATP = 2-(N(omega)-L-arginino)succinate + AMP + diphosphate + H(+). Its pathway is amino-acid biosynthesis; L-arginine biosynthesis; L-arginine from L-ornithine and carbamoyl phosphate: step 2/3. The protein is Argininosuccinate synthase of Bordetella bronchiseptica (strain ATCC BAA-588 / NCTC 13252 / RB50) (Alcaligenes bronchisepticus).